The primary structure comprises 562 residues: Arginine--tRNA ligase (562 aa).

The 'HIGH' region motif lies at 129–139; sequence ANPTGPLHVGH.

It belongs to the class-I aminoacyl-tRNA synthetase family. In terms of assembly, monomer.

The protein resides in the cytoplasm. It carries out the reaction tRNA(Arg) + L-arginine + ATP = L-arginyl-tRNA(Arg) + AMP + diphosphate. The sequence is that of Arginine--tRNA ligase (argS) from Xylella fastidiosa (strain 9a5c).